The following is a 352-amino-acid chain: N-terminal EF-hand calcium-binding protein 1 (352 aa).

Phosphoserine is present on Ser4. EF-hand domains follow at residues Lys26–Ser61 and Leu60–Glu95. The Ca(2+) site is built by Asp39, Asn41, Asp43, Lys45, and Glu50. The stretch at Leu135–Gln163 forms a coiled coil. The segment at Glu155–Val202 is disordered. Over residues His190 to Val202 the composition is skewed to polar residues. Ser192 and Ser197 each carry phosphoserine. Residues Glu209 to Tyr275 are a coiled coil. The 89-residue stretch at Met252–Met340 folds into the ABM domain.

Interacts with STX1. May interact with CPNE6. As to expression, expressed in brain (at protein level). Expressed in the cerebral cortex only in layer 4, thalamic nuclei (the mediodorsal nucleus), hippocampus (a small band of pyramidal neurons at the boundary between CA1 and CA3), interneurons interspersed throughout the hippocampus proper, interneurons in the hilus, bodies of the neurons but also their dendritic projections (at protein level).

It is found in the cytoplasm. The chain is N-terminal EF-hand calcium-binding protein 1 (Necab1) from Mus musculus (Mouse).